Reading from the N-terminus, the 522-residue chain is F-box/LRR-repeat protein 16 (522 aa).

In terms of domain architecture, F-box spans 38 to 84 (YDFTANLPDDCLAHIFQFLSAGDRKRCSLVSKRWLLVDGQNRHRLSL). LRR repeat units follow at residues 115-140 (SFSL…KLRG), 141-166 (CREI…SCGS), 169-191 (FGAK…SLKR), 266-290 (RLQV…HIVK), 291-316 (TPDC…HIDG), 319-344 (VKRI…VLIG), 348-369 (TYMS…ALCG), 370-393 (SGTI…KFCI), 395-420 (GCLI…KVKK), and 421-447 (CSLV…DDDE).

The protein is F-box/LRR-repeat protein 16 (FBL16) of Arabidopsis thaliana (Mouse-ear cress).